We begin with the raw amino-acid sequence, 481 residues long: Xylulose kinase (481 aa).

81–82 is a binding site for substrate; sequence QH. Residue D239 is the Proton acceptor of the active site.

It belongs to the FGGY kinase family.

It catalyses the reaction D-xylulose + ATP = D-xylulose 5-phosphate + ADP + H(+). Catalyzes the phosphorylation of D-xylulose to D-xylulose 5-phosphate. This is Xylulose kinase from Streptomyces rubiginosus.